Reading from the N-terminus, the 243-residue chain is 4-hydroxy-tetrahydrodipicolinate reductase (243 aa).

Residues 9-14, 78-80, and 104-107 each bind NAD(+); these read GANGKM, GTS, and APNF. His-134 serves as the catalytic Proton donor/acceptor. Position 135 (His-135) interacts with (S)-2,3,4,5-tetrahydrodipicolinate. Lys-138 acts as the Proton donor in catalysis. (S)-2,3,4,5-tetrahydrodipicolinate is bound at residue 144 to 145; it reads GT.

The protein belongs to the DapB family.

The protein resides in the cytoplasm. It carries out the reaction (S)-2,3,4,5-tetrahydrodipicolinate + NAD(+) + H2O = (2S,4S)-4-hydroxy-2,3,4,5-tetrahydrodipicolinate + NADH + H(+). It catalyses the reaction (S)-2,3,4,5-tetrahydrodipicolinate + NADP(+) + H2O = (2S,4S)-4-hydroxy-2,3,4,5-tetrahydrodipicolinate + NADPH + H(+). The protein operates within amino-acid biosynthesis; L-lysine biosynthesis via DAP pathway; (S)-tetrahydrodipicolinate from L-aspartate: step 4/4. In terms of biological role, catalyzes the conversion of 4-hydroxy-tetrahydrodipicolinate (HTPA) to tetrahydrodipicolinate. The polypeptide is 4-hydroxy-tetrahydrodipicolinate reductase (Legionella pneumophila subsp. pneumophila (strain Philadelphia 1 / ATCC 33152 / DSM 7513)).